The primary structure comprises 280 residues: Cytochrome c1 (280 aa).

A signal peptide spans 1–21; sequence MKKLLISAVSALVLGSGAALA. Cysteine 55, cysteine 58, histidine 59, and methionine 205 together coordinate heme c. The helical transmembrane segment at 249-267 threads the bilayer; the sequence is MGLVAVVMLGLLSVMLYLT.

The main subunits of complex b-c1 are: cytochrome b, cytochrome c1 and the Rieske protein. Post-translationally, binds 1 heme c group covalently per subunit.

Its subcellular location is the cell membrane. Its function is as follows. Component of the ubiquinol-cytochrome c reductase complex (complex III or cytochrome b-c1 complex), which is a respiratory chain that generates an electrochemical potential coupled to ATP synthesis. c1 functions as an electron donor to cytochrome c. The sequence is that of Cytochrome c1 (petC) from Rhodobacter capsulatus (Rhodopseudomonas capsulata).